The primary structure comprises 381 residues: Guanine nucleotide-binding protein G(s) subunit alpha (381 aa).

The S-palmitoyl cysteine moiety is linked to residue cysteine 3. In terms of domain architecture, G-alpha spans 36-381 (ALHRLLLLGA…RMHLQKYELL (346 aa)). Residues 39 to 52 (RLLLLGAGESGKST) are G1 motif. GTP contacts are provided by residues 44 to 51 (GAGESGKS), 183 to 189 (LRCRVLT), 208 to 212 (GVGGQ), 277 to 280 (NKQD), and alanine 353. The Mg(2+) site is built by serine 51 and threonine 189. A G2 motif region spans residues 181 to 189 (DILRCRVLT). The G3 motif stretch occupies residues 204 to 213 (FYMFGVGGQR). A G4 motif region spans residues 273–280 (ILFLNKQD). Positions 351 to 356 (TTAVDT) are G5 motif.

It belongs to the G-alpha family. G(s) subfamily. As to quaternary structure, g proteins are composed of 3 units; alpha, beta and gamma. The alpha chain contains the guanine nucleotide binding site.

Guanine nucleotide-binding proteins (G proteins) are involved as modulators or transducers in various transmembrane signaling systems. The G(s) protein is involved in hormonal regulation of adenylate cyclase: it activates the cyclase in response to beta-adrenergic stimuli. The polypeptide is Guanine nucleotide-binding protein G(s) subunit alpha (Geodia cydonium (Sponge)).